Reading from the N-terminus, the 171-residue chain is Skp-like protein (171 aa).

The signal sequence occupies residues 1 to 21 (MKKLLFSTFLLVLGSTSAAHA).

It belongs to the Skp family.

This is Skp-like protein from Chlamydia pneumoniae (Chlamydophila pneumoniae).